The primary structure comprises 704 residues: Lebercilin (704 aa).

A compositionally biased stretch (basic and acidic residues) spans M1–K14. The interval M1 to K80 is disordered. Residue S7 is modified to Phosphoserine. Low complexity predominate over residues S25–P40. At S48 the chain carries Phosphoserine. Residues T49 to V63 are compositionally biased toward basic and acidic residues. A coiled-coil region spans residues K105–I300. Disordered stretches follow at residues Q389–E417 and E476–E661. Residues Q404–E417 show a composition bias toward basic and acidic residues. The stretch at A448 to D479 forms a coiled coil. Positions S496–T505 are enriched in basic and acidic residues. Residues G570–S591 show a composition bias toward polar residues. Residues P592 to T608 are compositionally biased toward basic and acidic residues. Residues S617–S627 are compositionally biased toward low complexity.

It belongs to the LCA5 family. Interacts with NINL. Interacts with OFD1. Interacts with FAM161A. Interacts with components of the IFT complex B. As to expression, detected in several tissues.

It localises to the cytoplasm. The protein localises to the cytoskeleton. The protein resides in the cilium axoneme. Its subcellular location is the cilium basal body. It is found in the cell projection. It localises to the cilium. Functionally, involved in intraflagellar protein (IFT) transport in photoreceptor cilia. This is Lebercilin (Lca5) from Mus musculus (Mouse).